We begin with the raw amino-acid sequence, 603 residues long: DNA mismatch repair protein MutL (603 aa).

Over residues 336–346 the composition is skewed to basic and acidic residues; that stretch reads EVSKKQKEQQK. 2 disordered regions span residues 336-355 and 361-384; these read EVSKKQKEQQKSEQIQMSFE and KETPTLFSKPNVPEYVPSDEDTSR.

It belongs to the DNA mismatch repair MutL/HexB family.

Its function is as follows. This protein is involved in the repair of mismatches in DNA. It is required for dam-dependent methyl-directed DNA mismatch repair. May act as a 'molecular matchmaker', a protein that promotes the formation of a stable complex between two or more DNA-binding proteins in an ATP-dependent manner without itself being part of a final effector complex. The protein is DNA mismatch repair protein MutL of Listeria welshimeri serovar 6b (strain ATCC 35897 / DSM 20650 / CCUG 15529 / CIP 8149 / NCTC 11857 / SLCC 5334 / V8).